A 104-amino-acid chain; its full sequence is Large ribosomal subunit protein uL24 (104 aa).

Belongs to the universal ribosomal protein uL24 family. In terms of assembly, part of the 50S ribosomal subunit.

Functionally, one of two assembly initiator proteins, it binds directly to the 5'-end of the 23S rRNA, where it nucleates assembly of the 50S subunit. In terms of biological role, one of the proteins that surrounds the polypeptide exit tunnel on the outside of the subunit. The protein is Large ribosomal subunit protein uL24 of Psychromonas ingrahamii (strain DSM 17664 / CCUG 51855 / 37).